Reading from the N-terminus, the 124-residue chain is Small ribosomal subunit protein uS12 (124 aa).

The residue at position 90 (D90) is a 3-methylthioaspartic acid.

The protein belongs to the universal ribosomal protein uS12 family. As to quaternary structure, part of the 30S ribosomal subunit. Contacts proteins S8 and S17. May interact with IF1 in the 30S initiation complex.

Functionally, with S4 and S5 plays an important role in translational accuracy. Its function is as follows. Interacts with and stabilizes bases of the 16S rRNA that are involved in tRNA selection in the A site and with the mRNA backbone. Located at the interface of the 30S and 50S subunits, it traverses the body of the 30S subunit contacting proteins on the other side and probably holding the rRNA structure together. The combined cluster of proteins S8, S12 and S17 appears to hold together the shoulder and platform of the 30S subunit. This chain is Small ribosomal subunit protein uS12, found in Wolbachia pipientis subsp. Culex pipiens (strain wPip).